The following is a 227-amino-acid chain: Cytochrome c oxidase subunit 2 (227 aa).

At 1–14 (MAYPFQLGLQDATS) the chain is on the mitochondrial intermembrane side. A helical transmembrane segment spans residues 15-45 (PIMEELMNFHDHTLMIVFLISSLVLYIISLM). Over 46 to 59 (LTTKLTHTSTMDAQ) the chain is Mitochondrial matrix. A helical membrane pass occupies residues 60 to 87 (EVETIWTILPAVILILIALPSLRILYMM). The Mitochondrial intermembrane portion of the chain corresponds to 88 to 227 (DEINNPVLTV…NFENWSASMI (140 aa)). Cu cation contacts are provided by H161, C196, E198, C200, H204, and M207. A Mg(2+)-binding site is contributed by E198.

This sequence belongs to the cytochrome c oxidase subunit 2 family. As to quaternary structure, component of the cytochrome c oxidase (complex IV, CIV), a multisubunit enzyme composed of 14 subunits. The complex is composed of a catalytic core of 3 subunits MT-CO1, MT-CO2 and MT-CO3, encoded in the mitochondrial DNA, and 11 supernumerary subunits COX4I, COX5A, COX5B, COX6A, COX6B, COX6C, COX7A, COX7B, COX7C, COX8 and NDUFA4, which are encoded in the nuclear genome. The complex exists as a monomer or a dimer and forms supercomplexes (SCs) in the inner mitochondrial membrane with NADH-ubiquinone oxidoreductase (complex I, CI) and ubiquinol-cytochrome c oxidoreductase (cytochrome b-c1 complex, complex III, CIII), resulting in different assemblies (supercomplex SCI(1)III(2)IV(1) and megacomplex MCI(2)III(2)IV(2)). Found in a complex with TMEM177, COA6, COX18, COX20, SCO1 and SCO2. Interacts with TMEM177 in a COX20-dependent manner. Interacts with COX20. Interacts with COX16. The cofactor is Cu cation.

Its subcellular location is the mitochondrion inner membrane. It carries out the reaction 4 Fe(II)-[cytochrome c] + O2 + 8 H(+)(in) = 4 Fe(III)-[cytochrome c] + 2 H2O + 4 H(+)(out). Component of the cytochrome c oxidase, the last enzyme in the mitochondrial electron transport chain which drives oxidative phosphorylation. The respiratory chain contains 3 multisubunit complexes succinate dehydrogenase (complex II, CII), ubiquinol-cytochrome c oxidoreductase (cytochrome b-c1 complex, complex III, CIII) and cytochrome c oxidase (complex IV, CIV), that cooperate to transfer electrons derived from NADH and succinate to molecular oxygen, creating an electrochemical gradient over the inner membrane that drives transmembrane transport and the ATP synthase. Cytochrome c oxidase is the component of the respiratory chain that catalyzes the reduction of oxygen to water. Electrons originating from reduced cytochrome c in the intermembrane space (IMS) are transferred via the dinuclear copper A center (CU(A)) of subunit 2 and heme A of subunit 1 to the active site in subunit 1, a binuclear center (BNC) formed by heme A3 and copper B (CU(B)). The BNC reduces molecular oxygen to 2 water molecules using 4 electrons from cytochrome c in the IMS and 4 protons from the mitochondrial matrix. This is Cytochrome c oxidase subunit 2 (MT-CO2) from Maxomys bartelsii (Bartels's Javan maxomys).